The chain runs to 421 residues: Mannose-1-phosphate guanyltransferase alpha-A (421 aa).

This sequence belongs to the transferase hexapeptide repeat family.

It catalyses the reaction alpha-D-mannose 1-phosphate + GTP + H(+) = GDP-alpha-D-mannose + diphosphate. Its pathway is nucleotide-sugar biosynthesis; GDP-alpha-D-mannose biosynthesis; GDP-alpha-D-mannose from alpha-D-mannose 1-phosphate (GTP route): step 1/1. In Xenopus laevis (African clawed frog), this protein is Mannose-1-phosphate guanyltransferase alpha-A (gmppa-a).